Consider the following 24-residue polypeptide: Brevinin-1Sb (24 aa).

C18 and C24 are disulfide-bonded.

As to expression, expressed by the skin glands.

The protein localises to the secreted. Functionally, antibacterial activity against Gram-negative bacterium E.coli. The polypeptide is Brevinin-1Sb (Lithobates sphenocephalus (Southern leopard frog)).